Reading from the N-terminus, the 344-residue chain is Protein YRO2 (344 aa).

Residues 1 to 34 (MSDYVELLKRGGNEAIKINPPTGADFHITSRGSD) are Extracellular-facing. Residues 35-55 (WLFTVFCVNLLFGVILVPLMF) traverse the membrane as a helical segment. Over 56-62 (RKPVKDR) the chain is Cytoplasmic. The chain crosses the membrane as a helical span at residues 63 to 83 (FVYYTAIAPNLFMSIAYFTMA). The Extracellular segment spans residues 84–119 (SNLGWIPVRAKYNHVQTSTQKEHPGYRQIFYARYVG). The chain crosses the membrane as a helical span at residues 120–140 (WFLAFPWPIIQMSLLGGTPLW). Residue Gln141 is a topological domain, cytoplasmic. The chain crosses the membrane as a helical span at residues 142-162 (IAFNVGMTEIFTVCWLIAACV). Over 163–172 (HSTYKWGYYT) the chain is Extracellular. The helical transmembrane segment at 173–193 (IGIGAAIVVCISLMTTTFNLV) threads the bilayer. The Cytoplasmic portion of the chain corresponds to 194 to 202 (KARGKDVSN). A helical transmembrane segment spans residues 203–223 (VFITFMSVIMFLWLIAYPTCF). The Extracellular segment spans residues 224-238 (GITDGGNVLQPDSAT). A helical membrane pass occupies residues 239-259 (IFYGIIDLLILSILPVLFMPL). Topologically, residues 260–344 (ANYLGIERLG…EEEDVATDSE (85 aa)) are cytoplasmic. The segment at 282–344 (PVAEKKMPSP…EEEDVATDSE (63 aa)) is disordered. Residue Lys286 forms a Glycyl lysine isopeptide (Lys-Gly) (interchain with G-Cter in ubiquitin) linkage. A Phosphoserine modification is found at Ser293. Residues 297–306 (SDSDSSIKEK) show a composition bias toward basic and acidic residues. Residues 307–330 (LKLKKKHKKDKKKAKKAKKAKKAK) show a composition bias toward basic residues. The span at 334 to 344 (EEEEDVATDSE) shows a compositional bias: acidic residues. Thr341 bears the Phosphothreonine mark. Ser343 is modified (phosphoserine).

Belongs to the archaeal/bacterial/fungal opsin family.

Its subcellular location is the membrane. This is Protein YRO2 (YRO2) from Saccharomyces cerevisiae (strain ATCC 204508 / S288c) (Baker's yeast).